Consider the following 898-residue polypeptide: Sodium/hydrogen exchanger 5 (898 aa).

The Cytoplasmic portion of the chain corresponds to 1–48; it reads MLSAALLLLPGLPLAGAGATEEPTQESGPLGEPPPGLALFRWQWHEVE. Residues 49–69 traverse the membrane as a helical segment; it reads APYLVALWILVASLAKIVFHL. Topologically, residues 70-76 are extracellular; the sequence is SRKVTSL. Residues 77 to 97 form a helical membrane-spanning segment; the sequence is VPESCLLILLGLVLGGIVLAV. Topologically, residues 98-106 are cytoplasmic; sequence AKKAEYQLE. A helical transmembrane segment spans residues 107-127; that stretch reads PGTFFLFLLPPIVLDSGYFMP. Residues 128–137 lie on the Extracellular side of the membrane; that stretch reads SRLFFDNLGA. The chain crosses the membrane as a helical span at residues 138–158; that stretch reads ILTYAVVGTLWNAFTTGVALW. Over 159–176 the chain is Cytoplasmic; the sequence is GLQQAGLVAPRVQAGLLD. Residues 177–197 traverse the membrane as a helical segment; the sequence is FLLFGSLISAVDPVAVLAVFE. Topologically, residues 198–203 are extracellular; that stretch reads EVHVNQ. Residues 204–224 form a helical membrane-spanning segment; the sequence is TLFIIIFGESLLNDAVTVVLY. Topologically, residues 225-249 are cytoplasmic; it reads KVCNSFVEMGSANVQATDYLKGVAS. Residues 250–270 form a helical membrane-spanning segment; that stretch reads LFVVSLGGAAVGLVFAFLLAL. At 271-279 the chain is on the extracellular side; the sequence is TTRFTKRVR. Residues 280-300 form a helical membrane-spanning segment; it reads IIEPLLVFLLAYAAYLTAEMA. Residues 301–334 lie on the Cytoplasmic side of the membrane; it reads SLSAILAVTMCGLGCKKYVEANISHKSRTAVKYT. The helical transmembrane segment at 335 to 355 threads the bilayer; it reads MKTLASCAETVIFMLLGISAV. Residues 356-363 lie on the Extracellular side of the membrane; that stretch reads DSSKWAWD. A helical membrane pass occupies residues 364 to 384; the sequence is SGLVLGTLFFILFFRALGVVL. Residues 385 to 401 are Cytoplasmic-facing; sequence QTWALNQFRLVPLDKID. Residues 402 to 422 traverse the membrane as a helical segment; sequence QVVMSYGGLRGAVAFALVILL. Topologically, residues 423-431 are extracellular; the sequence is DRTKVPAKD. A helical transmembrane segment spans residues 432–452; the sequence is YFVATTIVVVFFTVIVQGLTI. At 453–898 the chain is on the cytoplasmic side; it reads KPLVKWLRVK…CIQFNRGGRL (446 aa). Disordered regions lie at residues 660–693 and 826–866; these read FTKSKPRPRKTSHKKKDGVANPEATNGKPPRDLG and EEPQ…PQQE. The span at 663-675 shows a compositional bias: basic residues; the sequence is SKPRPRKTSHKKK. The span at 857–866 shows a compositional bias: polar residues; it reads ESSADIPQQE.

It belongs to the monovalent cation:proton antiporter 1 (CPA1) transporter (TC 2.A.36) family. As to quaternary structure, interacts with CHP1 and CHP2. Interacts with ARRB2; facilitates the endocytosis of SLC9A5 from the plasma membrane. Interacts with RACK1; this interaction positively regulates SLC9A5 activity and promote SLC9A5 localization to focal adhesions. Interacts with SCAMP2; this interaction regulates SLC9A5 cell-surface targeting and SLC9A5 activity. Phosphorylated by PRKAA2; promotes its accumulation at the cell surface. Phosphorylated by CSNK2A1 in a manner favoring its beta-arrestin binding and endocytosis. Highest expression level is detected in brain. Expressed in hippocampal neurons (at protein level).

It is found in the cell membrane. Its subcellular location is the recycling endosome membrane. It localises to the cell projection. The protein resides in the dendritic spine membrane. The protein localises to the synaptic cell membrane. It is found in the cell junction. Its subcellular location is the focal adhesion. The enzyme catalyses Na(+)(in) + H(+)(out) = Na(+)(out) + H(+)(in). Functionally, plasma membrane Na(+)/H(+) antiporter. Mediates the electroneutral exchange of intracellular H(+) ions for extracellular Na(+) in 1:1 stoichiometry. Responsible for regulating intracellular pH homeostasis, in particular in neural tissues. Acts as a negative regulator of dendritic spine growth. Plays a role in postsynaptic remodeling and signaling. Can also contribute to organellar pH regulation, with consequences for receptor tyrosine kinase trafficking. This Mus musculus (Mouse) protein is Sodium/hydrogen exchanger 5 (Slc9a5).